The sequence spans 68 residues: Preprofallaxidin-5 (68 aa).

Residues 1 to 22 form the signal peptide; the sequence is MASLKKSLFLVLFLGFVSLSIC. A propeptide spanning residues 23–51 is cleaved from the precursor; the sequence is EEEKREDKEDEGENEEAEENHEERSEEKR. A disordered region spans residues 24-50; that stretch reads EEKREDKEDEGENEEAEENHEERSEEK. Positions 30-42 are enriched in acidic residues; the sequence is KEDEGENEEAEEN. Position 64 is a leucine amide (Leu64). Ser68 is a propeptide.

The protein belongs to the frog skin active peptide (FSAP) family. Brevinin subfamily. Expressed by the skin glands.

It localises to the secreted. The chain is Preprofallaxidin-5 from Litoria fallax (Eastern dwarf tree frog).